The primary structure comprises 483 residues: Glutamyl-tRNA(Gln) amidotransferase subunit A (483 aa).

Active-site charge relay system residues include Lys77 and Ser152. The active-site Acyl-ester intermediate is Ser176.

This sequence belongs to the amidase family. GatA subfamily. Heterotrimer of A, B and C subunits.

The catalysed reaction is L-glutamyl-tRNA(Gln) + L-glutamine + ATP + H2O = L-glutaminyl-tRNA(Gln) + L-glutamate + ADP + phosphate + H(+). Its function is as follows. Allows the formation of correctly charged Gln-tRNA(Gln) through the transamidation of misacylated Glu-tRNA(Gln) in organisms which lack glutaminyl-tRNA synthetase. The reaction takes place in the presence of glutamine and ATP through an activated gamma-phospho-Glu-tRNA(Gln). The polypeptide is Glutamyl-tRNA(Gln) amidotransferase subunit A (Listeria monocytogenes serovar 1/2a (strain ATCC BAA-679 / EGD-e)).